The primary structure comprises 86 residues: MNTIVLFLTLLILVSSCTSIVMKSSNSKERTYPVTPALNPLTGQHSLRQRQLIFCDECANACFRRKKPVRSCQRFICRCAIRDVGY.

The first 19 residues, 1-19 (MNTIVLFLTLLILVSSCTS), serve as a signal peptide directing secretion. 3 disulfide bridges follow: cysteine 55–cysteine 72, cysteine 58–cysteine 77, and cysteine 62–cysteine 79.

This sequence belongs to the DEFL family.

It is found in the secreted. This is Putative defensin-like protein 211 from Arabidopsis thaliana (Mouse-ear cress).